The chain runs to 200 residues: Imidazoleglycerol-phosphate dehydratase (200 aa).

Belongs to the imidazoleglycerol-phosphate dehydratase family.

Its subcellular location is the cytoplasm. It carries out the reaction D-erythro-1-(imidazol-4-yl)glycerol 3-phosphate = 3-(imidazol-4-yl)-2-oxopropyl phosphate + H2O. It participates in amino-acid biosynthesis; L-histidine biosynthesis; L-histidine from 5-phospho-alpha-D-ribose 1-diphosphate: step 6/9. This chain is Imidazoleglycerol-phosphate dehydratase, found in Chlorobium phaeobacteroides (strain BS1).